We begin with the raw amino-acid sequence, 326 residues long: MNKSFILSTGSYLPKKKLGNDEIALMVETSDEWIRQRTGITQRYIADEAELTSDLAVNSAKNAIEKAQISVDEIGLIIVATTTPDKTLPSCATIAQNKLKCKNAFSFDVQAACSGFIYAVTIADSLIKSNDRIKYALVIGAEIMSRIVDWKDRSTCVLFGDGAGAVIMKSTAHCNEMTENSTRGIISTNLYSDGNVDVLCTKGGISSTGDSGKIYMNGREVFKHAVDKLTASIEETLRCNNLKITDIDWLVPHQANIRIIEAVVKKLNFLMEKVINTVDQHANTSAASIPLALDYAIQKPKIKPGSLGILVAIGAGLTWGSVLLRY.

Catalysis depends on residues Cys113 and His253. Positions 254–258 (QANIR) are ACP-binding. Residue Asn283 is part of the active site.

The protein belongs to the thiolase-like superfamily. FabH family. Homodimer.

The protein localises to the cytoplasm. It catalyses the reaction malonyl-[ACP] + acetyl-CoA + H(+) = 3-oxobutanoyl-[ACP] + CO2 + CoA. The protein operates within lipid metabolism; fatty acid biosynthesis. Its function is as follows. Catalyzes the condensation reaction of fatty acid synthesis by the addition to an acyl acceptor of two carbons from malonyl-ACP. Catalyzes the first condensation reaction which initiates fatty acid synthesis and may therefore play a role in governing the total rate of fatty acid production. Possesses both acetoacetyl-ACP synthase and acetyl transacylase activities. Its substrate specificity determines the biosynthesis of branched-chain and/or straight-chain of fatty acids. This Wolbachia sp. subsp. Brugia malayi (strain TRS) protein is Beta-ketoacyl-[acyl-carrier-protein] synthase III.